A 232-amino-acid polypeptide reads, in one-letter code: Acetate--CoA ligase [ADP-forming] I subunit beta (232 aa).

An ATP-grasp domain is found at 27 to 63 (KEILKLYGIPVPEFKVARNEEEAVKFSGEIGYPVVMK). Residue 53 to 64 (SGEIGYPVVMKI) coordinates ATP.

It belongs to the acetate CoA ligase beta subunit family. In terms of assembly, heterotetramer of two alpha and two beta subunits.

Its subcellular location is the cytoplasm. The enzyme catalyses acetate + ATP + CoA = acetyl-CoA + ADP + phosphate. Its activity is regulated as follows. Activity is dependent on magnesium. Its function is as follows. Catalyzes the reversible formation of acetate and ATP from acetyl-CoA by using ADP and phosphate. Can use other substrates such as isobutyryl-CoA, propionyl-CoA and butyryl-CoA, but not indoleacetyl-CoA, phenylacetyl-CoA or succinyl-CoA. Seems to be involved primarily in the conversion of acetyl-CoA to acetate. Participates in the degradation of branched-chain amino acids via branched-chain-acyl-CoA esters. The sequence is that of Acetate--CoA ligase [ADP-forming] I subunit beta from Pyrococcus furiosus (strain ATCC 43587 / DSM 3638 / JCM 8422 / Vc1).